We begin with the raw amino-acid sequence, 256 residues long: Acetyl-coenzyme A carboxylase carboxyl transferase subunit alpha (256 aa).

A CoA carboxyltransferase C-terminal domain is found at 1–236; it reads MSDVARILKE…KTAIVDELAE (236 aa).

Belongs to the AccA family. Acetyl-CoA carboxylase is a heterohexamer composed of biotin carboxyl carrier protein (AccB), biotin carboxylase (AccC) and two subunits each of ACCase subunit alpha (AccA) and ACCase subunit beta (AccD).

The protein resides in the cytoplasm. The catalysed reaction is N(6)-carboxybiotinyl-L-lysyl-[protein] + acetyl-CoA = N(6)-biotinyl-L-lysyl-[protein] + malonyl-CoA. It functions in the pathway lipid metabolism; malonyl-CoA biosynthesis; malonyl-CoA from acetyl-CoA: step 1/1. Functionally, component of the acetyl coenzyme A carboxylase (ACC) complex. First, biotin carboxylase catalyzes the carboxylation of biotin on its carrier protein (BCCP) and then the CO(2) group is transferred by the carboxyltransferase to acetyl-CoA to form malonyl-CoA. This chain is Acetyl-coenzyme A carboxylase carboxyl transferase subunit alpha, found in Streptococcus thermophilus (strain ATCC BAA-491 / LMD-9).